An 805-amino-acid chain; its full sequence is Leucine--tRNA ligase (805 aa).

The short motif at 40 to 51 (PYPSGSGLHVGH) is the 'HIGH' region element. The 'KMSKS' region signature appears at 576–580 (KMSKS). Lysine 579 lines the ATP pocket.

The protein belongs to the class-I aminoacyl-tRNA synthetase family.

It is found in the cytoplasm. The catalysed reaction is tRNA(Leu) + L-leucine + ATP = L-leucyl-tRNA(Leu) + AMP + diphosphate. The protein is Leucine--tRNA ligase of Chlorobium limicola (strain DSM 245 / NBRC 103803 / 6330).